The following is a 602-amino-acid chain: Cytokine-like nuclear factor N-PAC (602 aa).

2 positions are modified to phosphoserine: S8 and S10. Residues 22 to 81 enclose the PWWP domain; the sequence is PKDLIWAKMKGFTPWPGMIVDPPLDLLSQQRRANTKCVFFFGSRNFAWIEENNIKPFEGP. The interval 162–262 is disordered; sequence GSPDEGDGLD…ASSTPTGRRR (101 aa). Composition is skewed to polar residues over residues 176 to 188, 204 to 217, and 224 to 233; these read ADSS…SPAV, AATS…SAKS, and SAQQSPSGPS. Residues S224, S228, and S243 each carry the phosphoserine modification. Positions 309-602 are dehydrogenase domain; it reads RDIVPSEQTF…SSAVFVRSRF (294 aa). NAD(+) is bound by residues 319-333, T411, and R554; that span reads GFLG…IVKD.

It belongs to the HIBADH-related family. NP60 subfamily. Binds to mononucleosomes. Interacts with male-specific lethal (MSL) histone acetyltransferase complex at least composed of mof, msl-1, msl-2 and msl-3.

The protein resides in the chromosome. In terms of biological role, nucleosome-destabilizing factor that is recruited to genes during transcriptional activation and colocalizes with a subset of trimethylated 'Lys-36' histone H3 (H3K36me3)-enriched regions. Binds DNA (in vitro). Facilitates Pol II transcription through nucleosomes. Facilitates male-specific lethal (MSL) histone acetyltransferase complex targeting to active genes on the X chromosome. Stimulates the acetylation of 'Lys-56' of nucleosomal histone H3 (H3K56ac) by nej. May have oxidoreductase activity. This is Cytokine-like nuclear factor N-PAC from Drosophila melanogaster (Fruit fly).